The sequence spans 435 residues: 3-phosphoshikimate 1-carboxyvinyltransferase (435 aa).

Residues K22, S23, and R27 each coordinate 3-phosphoshikimate. A phosphoenolpyruvate-binding site is contributed by K22. G94 and R122 together coordinate phosphoenolpyruvate. Positions 166, 168, 314, and 341 each coordinate 3-phosphoshikimate. Q168 contributes to the phosphoenolpyruvate binding site. Catalysis depends on D314, which acts as the Proton acceptor. 2 residues coordinate phosphoenolpyruvate: R345 and R388.

The protein belongs to the EPSP synthase family. In terms of assembly, monomer.

Its subcellular location is the cytoplasm. It catalyses the reaction 3-phosphoshikimate + phosphoenolpyruvate = 5-O-(1-carboxyvinyl)-3-phosphoshikimate + phosphate. Its pathway is metabolic intermediate biosynthesis; chorismate biosynthesis; chorismate from D-erythrose 4-phosphate and phosphoenolpyruvate: step 6/7. Functionally, catalyzes the transfer of the enolpyruvyl moiety of phosphoenolpyruvate (PEP) to the 5-hydroxyl of shikimate-3-phosphate (S3P) to produce enolpyruvyl shikimate-3-phosphate and inorganic phosphate. The sequence is that of 3-phosphoshikimate 1-carboxyvinyltransferase from Ruthia magnifica subsp. Calyptogena magnifica.